Here is a 275-residue protein sequence, read N- to C-terminus: 3-methyl-2-oxobutanoate hydroxymethyltransferase (275 aa).

Mg(2+)-binding residues include Asp-49 and Asp-88. 3-methyl-2-oxobutanoate-binding positions include 49–50 (DS), Asp-88, and Lys-118. Glu-120 provides a ligand contact to Mg(2+). The active-site Proton acceptor is the Glu-187.

It belongs to the PanB family. In terms of assembly, homodecamer; pentamer of dimers. Mg(2+) serves as cofactor.

The protein localises to the cytoplasm. It carries out the reaction 3-methyl-2-oxobutanoate + (6R)-5,10-methylene-5,6,7,8-tetrahydrofolate + H2O = 2-dehydropantoate + (6S)-5,6,7,8-tetrahydrofolate. It functions in the pathway cofactor biosynthesis; (R)-pantothenate biosynthesis; (R)-pantoate from 3-methyl-2-oxobutanoate: step 1/2. Functionally, catalyzes the reversible reaction in which hydroxymethyl group from 5,10-methylenetetrahydrofolate is transferred onto alpha-ketoisovalerate to form ketopantoate. The polypeptide is 3-methyl-2-oxobutanoate hydroxymethyltransferase (Bartonella henselae (strain ATCC 49882 / DSM 28221 / CCUG 30454 / Houston 1) (Rochalimaea henselae)).